The chain runs to 467 residues: Membrane-bound acylglycerophosphatidylinositol O-acyltransferase mboat7 (467 aa).

At 1-5 (MSPDE) the chain is on the cytoplasmic side. A helical transmembrane segment spans residues 6 to 22 (LVYLGILAATIPVGFLF). The Lumenal portion of the chain corresponds to 23–33 (RYLSPPVKQGA). The helical transmembrane segment at 34–57 (ALLLGLIISIATCGIHTLHSLCTV) threads the bilayer. Residues 58-73 (LGTWIIIKINWRSAPA) lie on the Cytoplasmic side of the membrane. The chain crosses the membrane as a helical span at residues 74–93 (LSLAWTFLYLLFFRLVTWFG). The Lumenal segment spans residues 94–193 (LPQPTPFANA…LPGKEPCLQR (100 aa)). Residues 194–211 (LKMVPVYGLLFIAVNSVF) form a helical membrane-spanning segment. The Cytoplasmic segment spans residues 212–230 (PLSYVRTEDFLEHNYFYRF). A helical membrane pass occupies residues 231–260 (FYMVAIFFVFRMRFYSAWCGAEAGCISAGL). Topologically, residues 261–421 (GCYPQGALSK…LKASDTISYW (161 aa)) are lumenal. N-linked (GlcNAc...) asparagine glycosylation occurs at Asn316. The helical transmembrane segment at 422-442 (SSIYFVIHIIAIVCIAVGQFM) threads the bilayer. Over 443 to 467 (KGGRKREKRERGEGEKEDAVREKAE) the chain is Cytoplasmic. Residues 447-467 (KREKRERGEGEKEDAVREKAE) are disordered. Residues 451–467 (RERGEGEKEDAVREKAE) are compositionally biased toward basic and acidic residues.

It belongs to the membrane-bound acyltransferase family.

It is found in the endoplasmic reticulum membrane. The enzyme catalyses a 1-acyl-sn-glycero-3-phospho-(1D-myo-inositol) + (5Z,8Z,11Z,14Z)-eicosatetraenoyl-CoA = a 1-acyl-2-(5Z,8Z,11Z,14Z-eicosatetraenoyl)-sn-glycero-3-phospho-(1D-myo-inositol) + CoA. It carries out the reaction (5Z,8Z,11Z,14Z)-eicosatetraenoyl-CoA + 1-hexadecanoyl-sn-glycero-3-phosphocholine = 1-hexadecanoyl-2-(5Z,8Z,11Z,14Z-eicosatetraenoyl)-sn-glycero-3-phosphocholine + CoA. The catalysed reaction is a 1-acyl-sn-glycero-3-phospho-(1D-myo-inositol) + an acyl-CoA = a 1,2-diacyl-sn-glycero-3-phospho-(1D-myo-inositol) + CoA. It catalyses the reaction 1-octadecanoyl-sn-glycero-3-phospho-(1D-myo-inositol) + (5Z,8Z,11Z,14Z)-eicosatetraenoyl-CoA = 1-octadecanoyl-2-(5Z,8Z,11Z,14Z-eicosatetraenoyl)-sn-glycero-3-phospho-(1D-myo-inositol) + CoA. It functions in the pathway lipid metabolism; phospholipid metabolism. In terms of biological role, acyltransferase which catalyzes the transfer of an acyl group from an acyl-CoA to a lysophosphatidylinositol (1-acylglycerophosphatidylinositol or LPI) leading to the production of a phosphatidylinositol (1,2-diacyl-sn-glycero-3-phosphoinositol or PI) and participates in the reacylation step of the phospholipid remodeling pathway also known as the Lands cycle. Prefers arachidonoyl-CoA as the acyl donor, thus contributing to the regulation of free levels arachidonic acid in cell. In Danio rerio (Zebrafish), this protein is Membrane-bound acylglycerophosphatidylinositol O-acyltransferase mboat7 (mboat7).